A 105-amino-acid chain; its full sequence is Nucleoid-associated protein lin2851 (105 aa).

The segment covering M1 to K16 has biased composition (low complexity). A disordered region spans residues M1–K23.

It belongs to the YbaB/EbfC family. Homodimer.

The protein localises to the cytoplasm. It is found in the nucleoid. Functionally, binds to DNA and alters its conformation. May be involved in regulation of gene expression, nucleoid organization and DNA protection. The protein is Nucleoid-associated protein lin2851 of Listeria innocua serovar 6a (strain ATCC BAA-680 / CLIP 11262).